Here is a 316-residue protein sequence, read N- to C-terminus: Probable cell division protein WhiA (316 aa).

The H-T-H motif DNA-binding region spans 275 to 309; sequence TLKELGEMVSGGKISKSGINHRLRKIDEIAEKLRA.

It belongs to the WhiA family.

Its function is as follows. Involved in cell division and chromosome segregation. The sequence is that of Probable cell division protein WhiA from Bacillus cereus (strain G9842).